Here is a 1168-residue protein sequence, read N- to C-terminus: Carbamoyl phosphate synthase arginine-specific large chain, mitochondrial (1168 aa).

A mitochondrion-targeting transit peptide spans 1–51 (MLSTVHKAGRAPALLRHGRRVPVQASQLRALTSGAQNTSIFQTQANAAQRL). The carboxyphosphate synthetic domain stretch occupies residues 86-483 (RDHVDVKKVL…SFQKAIRQVD (398 aa)). ATP-binding positions include arginine 213, 243-298 (ANKI…WKEV), arginine 253, glycine 259, glycine 260, lysine 290, leucine 292, glutamate 297, glycine 323, isoleucine 324, histidine 325, glutamine 366, and glutamate 380. The region spanning 217–409 (AKALEEINIP…LAYTAAKIGL (193 aa)) is the ATP-grasp 1 domain. Mg(2+) contacts are provided by glutamine 366, glutamate 380, and asparagine 382. Mn(2+) contacts are provided by glutamine 366, glutamate 380, and asparagine 382. The oligomerization domain stretch occupies residues 484–628 (PRFVGFQGDK…YTTYNASSHD (145 aa)). Positions 629–1017 (VTFEDKGTVI…AYWASLQSAM (389 aa)) are carbamoyl phosphate synthetic domain. The region spanning 754 to 951 (SEILDSIGVD…FIDAATKALV (198 aa)) is the ATP-grasp 2 domain. Residues 780-837 (AEEV…AQEI), arginine 790, lysine 829, isoleucine 831, glutamate 836, glycine 861, valine 862, histidine 863, serine 864, glutamine 904, and glutamate 922 each bind ATP. Residues glutamine 904, glutamate 922, and asparagine 924 each coordinate Mg(2+). Residues glutamine 904, glutamate 922, and asparagine 924 each contribute to the Mn(2+) site. An allosteric domain region spans residues 1018–1152 (NFRVPEPGEG…AEKLPRPEGI (135 aa)). In terms of domain architecture, MGS-like spans 1019-1168 (FRVPEPGEGL…WSEFIGGKPL (150 aa)).

The protein belongs to the CarB family. As to quaternary structure, heterodimer composed of 2 chains; the small (or glutamine) chain promotes the hydrolysis of glutamine to ammonia, which is used by the large (or ammonia) chain to synthesize carbamoyl phosphate. Requires Mg(2+) as cofactor. It depends on Mn(2+) as a cofactor.

Its subcellular location is the mitochondrion matrix. It catalyses the reaction hydrogencarbonate + L-glutamine + 2 ATP + H2O = carbamoyl phosphate + L-glutamate + 2 ADP + phosphate + 2 H(+). It carries out the reaction hydrogencarbonate + NH4(+) + 2 ATP = carbamoyl phosphate + 2 ADP + phosphate + 2 H(+). Its pathway is amino-acid biosynthesis; L-arginine biosynthesis; carbamoyl phosphate from bicarbonate: step 1/1. Its function is as follows. Large subunit of the arginine-specific carbamoyl phosphate synthase (CPSase). CPSase catalyzes the formation of carbamoyl phosphate from the ammonia moiety of glutamine, hydrogencarbonate, and phosphate donated by ATP, the first step of the arginine biosynthetic pathway. The large subunit (synthetase) binds the substrates ammonia (free or transferred from glutamine from the small subunit), hydrogencarbonate and ATP and carries out an ATP-coupled ligase reaction, activating hydrogencarbonate by forming carboxy phosphate which reacts with ammonia to form carbamoyl phosphate. This chain is Carbamoyl phosphate synthase arginine-specific large chain, mitochondrial (arg-3), found in Neurospora crassa (strain ATCC 24698 / 74-OR23-1A / CBS 708.71 / DSM 1257 / FGSC 987).